We begin with the raw amino-acid sequence, 190 residues long: Early nodulin-like protein 12 (190 aa).

Residues 1 to 21 form the signal peptide; sequence MGIIVPVLTLVFLLFAKVSHG. Residues 26-130 enclose the Phytocyanin domain; the sequence is RVILVGGSVG…GEKITLVVLA (105 aa). Asparagine 44 is a glycosylation site (N-linked (GlcNAc...) asparagine). A disulfide bond links cysteine 84 and cysteine 118. The segment at 135 to 164 is disordered; the sequence is GGGSSSGDAPKVSPVSPTAQTPAPAPGPAA. Residues 151 to 164 are compositionally biased toward low complexity; sequence PTAQTPAPAPGPAA. A lipid anchor (GPI-anchor amidated asparagine) is attached at asparagine 167. Residues 168–190 constitute a propeptide, removed in mature form; the sequence is AAVGLKVASGWFLTAVVVGLAMA.

The protein belongs to the early nodulin-like (ENODL) family. As to expression, confined to flowers and siliques. Expressed in female gametophytes.

It localises to the cell membrane. In terms of biological role, may act as a carbohydrate transporter. Required, together with ENODL11, ENODL12, ENODL13, ENODL14 and ENODL15, for male-female communication and pollen tube reception and burst at the synergid cell surface of the female gametophyte. This is Early nodulin-like protein 12 from Arabidopsis thaliana (Mouse-ear cress).